The chain runs to 79 residues: Toxin ICK-20 (79 aa).

The N-terminal stretch at 1–20 (MMKYFLVLCLVVLGVAAVQA) is a signal peptide. 4 disulfides stabilise this stretch: Cys43–Cys57, Cys50–Cys61, Cys56–Cys78, and Cys68–Cys74. Residue Asn71 is glycosylated (N-linked (GlcNAc...) asparagine).

Belongs to the neurotoxin 13 (insecticidal toxin ABC) family. ICK-21 subfamily. In terms of tissue distribution, expressed by the venom gland.

It is found in the secreted. Ion channel inhibitor. The protein is Toxin ICK-20 of Trittame loki (Brush-footed trapdoor spider).